A 363-amino-acid chain; its full sequence is uncharacterized protein (363 aa).

Residues 109–329 (RAALRELRSR…VEELQAQTRE (221 aa)) are a coiled coil.

This is an uncharacterized protein from Homo sapiens (Human).